We begin with the raw amino-acid sequence, 639 residues long: Mediator of RNA polymerase II transcription subunit 17 (639 aa).

The stretch at 160–187 (RLQNFNAAADKLLKSASRLENEVASETR) forms a coiled coil.

It belongs to the Mediator complex subunit 17 family. Component of the Mediator complex.

The protein resides in the nucleus. In terms of biological role, component of the Mediator complex, a coactivator involved in the regulated transcription of nearly all RNA polymerase II-dependent genes. Mediator functions as a bridge to convey information from gene-specific regulatory proteins to the basal RNA polymerase II transcription machinery. Mediator is recruited to promoters by direct interactions with regulatory proteins and serves as a scaffold for the assembly of a functional preinitiation complex with RNA polymerase II and the general transcription factors. The chain is Mediator of RNA polymerase II transcription subunit 17 (srb4) from Neosartorya fischeri (strain ATCC 1020 / DSM 3700 / CBS 544.65 / FGSC A1164 / JCM 1740 / NRRL 181 / WB 181) (Aspergillus fischerianus).